The following is a 482-amino-acid chain: Exodeoxyribonuclease 7 large subunit (482 aa).

The disordered stretch occupies residues 457–482; sequence TLDTGGAPAKPASKPKQKPPEQGSLF.

Belongs to the XseA family. In terms of assembly, heterooligomer composed of large and small subunits.

It is found in the cytoplasm. It catalyses the reaction Exonucleolytic cleavage in either 5'- to 3'- or 3'- to 5'-direction to yield nucleoside 5'-phosphates.. Functionally, bidirectionally degrades single-stranded DNA into large acid-insoluble oligonucleotides, which are then degraded further into small acid-soluble oligonucleotides. This chain is Exodeoxyribonuclease 7 large subunit, found in Ruegeria pomeroyi (strain ATCC 700808 / DSM 15171 / DSS-3) (Silicibacter pomeroyi).